A 94-amino-acid chain; its full sequence is MFTINAEVRKEQGKGASRRLRAANKFPAIIYGGKEAPLAIELDHDKVINMQAKAEFYSEVLTIVVDGKEIKVKAQDVQRHPYKPKLQHIDFVRA.

It belongs to the bacterial ribosomal protein bL25 family. As to quaternary structure, part of the 50S ribosomal subunit; part of the 5S rRNA/L5/L18/L25 subcomplex. Contacts the 5S rRNA. Binds to the 5S rRNA independently of L5 and L18.

Functionally, this is one of the proteins that binds to the 5S RNA in the ribosome where it forms part of the central protuberance. The polypeptide is Large ribosomal subunit protein bL25 (Shigella boydii serotype 18 (strain CDC 3083-94 / BS512)).